We begin with the raw amino-acid sequence, 288 residues long: Bifunctional protein FolD (288 aa).

NADP(+)-binding positions include 166–168 (GAS) and I232.

The protein belongs to the tetrahydrofolate dehydrogenase/cyclohydrolase family. Homodimer.

The enzyme catalyses (6R)-5,10-methylene-5,6,7,8-tetrahydrofolate + NADP(+) = (6R)-5,10-methenyltetrahydrofolate + NADPH. The catalysed reaction is (6R)-5,10-methenyltetrahydrofolate + H2O = (6R)-10-formyltetrahydrofolate + H(+). It functions in the pathway one-carbon metabolism; tetrahydrofolate interconversion. In terms of biological role, catalyzes the oxidation of 5,10-methylenetetrahydrofolate to 5,10-methenyltetrahydrofolate and then the hydrolysis of 5,10-methenyltetrahydrofolate to 10-formyltetrahydrofolate. The polypeptide is Bifunctional protein FolD (Escherichia coli (strain UTI89 / UPEC)).